Here is a 136-residue protein sequence, read N- to C-terminus: uncharacterized protein (136 aa).

This is an uncharacterized protein from Enterobacteria phage T4 (Bacteriophage T4).